The chain runs to 299 residues: Recombination-associated protein RdgC (299 aa).

Belongs to the RdgC family.

The protein resides in the cytoplasm. The protein localises to the nucleoid. May be involved in recombination. The protein is Recombination-associated protein RdgC of Cupriavidus pinatubonensis (strain JMP 134 / LMG 1197) (Cupriavidus necator (strain JMP 134)).